The sequence spans 310 residues: Vomeronasal type-1 receptor 90 (310 aa).

The Extracellular portion of the chain corresponds to 1 to 20; sequence MRRISTLYGVVDKQAIFFSE. The helical transmembrane segment at 21 to 41 threads the bilayer; that stretch reads VVIGISFNSILFLFHIFQFLL. Residues 42–46 are Cytoplasmic-facing; it reads ERRLR. A helical membrane pass occupies residues 47 to 67; the sequence is ITDLIISLLALIHLGMLTVMG. Topologically, residues 68–93 are extracellular; it reads FRAVDIFASQNVWNDIKCKSLAHLHR. Residues cysteine 85 and cysteine 172 are joined by a disulfide bond. A helical transmembrane segment spans residues 94–114; that stretch reads LLRGLSLCATCLLSIFQAITL. The Cytoplasmic segment spans residues 115 to 135; sequence SPRSSCLAKFKYKSTQHSLCS. Residues 136–156 form a helical membrane-spanning segment; that stretch reads LLVLWAFYMSCGTHYSFTIVA. At 157–183 the chain is on the extracellular side; it reads DYNFSSRSLIFVTESCIILPMDYITRH. Residue asparagine 159 is glycosylated (N-linked (GlcNAc...) asparagine). Residues 184–204 form a helical membrane-spanning segment; the sequence is LFFILGIFRDVSFIGLMALSS. Residues 205 to 238 lie on the Cytoplasmic side of the membrane; sequence GYMVALLCRHRKQAQHLHRTSLSPKASPEQRATR. The chain crosses the membrane as a helical span at residues 239-259; it reads TILLLMSFFVLMYCLDCTISA. At 260-271 the chain is on the extracellular side; that stretch reads SRLMHNGEPIHH. A helical membrane pass occupies residues 272-292; the sequence is SIQMMVSNSYATLSPLLLIVT. Residues 293-310 lie on the Cytoplasmic side of the membrane; it reads ENRISRFLKSLLGRTVDA.

Belongs to the G-protein coupled receptor 1 family. As to expression, expressed in 1-4% of neurons of the vomeronasal organ. Only one pheromone receptor gene may be expressed in a particular neuron. Not expressed in the main olfactory epithelium.

Its subcellular location is the cell membrane. Functionally, putative pheromone receptor implicated in the regulation of social as well as reproductive behavior. In Rattus norvegicus (Rat), this protein is Vomeronasal type-1 receptor 90 (Vom1r90).